The chain runs to 862 residues: Cell surface glycoprotein (862 aa).

The signal sequence occupies residues 1 to 34; the sequence is MTDTQQKIKAVLLTVLMVTSVFAATIAFSGAAAA. Disordered regions lie at residues 35–60, 101–126, and 200–220; these read SERG…SAGN, ILLE…EGTE, and VNTN…DRDD. Polar residues predominate over residues 43–57; it reads YTTGPTDGNQDNVDS. Residues 206-220 are compositionally biased toward basic and acidic residues; the sequence is NDDHPNPAADGDRDD. N442, N520, N550, N702, and N761 each carry an N-linked (GlcNAc...) asparagine glycan. The interval 752–838 is disordered; the sequence is LSDENVEPGN…TEEATTEATG (87 aa). Over residues 784-801 the composition is skewed to acidic residues; it reads SLEEEQPATDTPEPDTDT. Residues 802–815 show a composition bias toward low complexity; it reads PEPATDTPEPATDT. Acidic residues predominate over residues 816–833; sequence PEPDTDTPEPDTETEEAT. Residues 838 to 858 traverse the membrane as a helical segment; it reads GPGFTAAIALIALVAAALLAV. The PGF sorting signal signature appears at 839–841; the sequence is PGF.

Belongs to the halobacterial S-layer protein family. Post-translationally, glycosylated. In terms of processing, cleaved by the archaeosortase ArtA at the C-terminus, with removal of a short hydrophobic segment. Lipidation.

The protein resides in the secreted. The protein localises to the cell wall. It localises to the S-layer. Its subcellular location is the cell membrane. In terms of biological role, S-layer protein. The S-layer is a paracrystalline mono-layered assembly of proteins which coat the surface of the cell. The protein is Cell surface glycoprotein of Haloarcula japonica (strain ATCC 49778 / DSM 6131 / JCM 7785 / NBRC 101032 / NCIMB 13157 / TR-1).